We begin with the raw amino-acid sequence, 344 residues long: Melanocyte-stimulating hormone receptor (344 aa).

Topologically, residues 1–37 (MPMQGAQRKLLGSLNSTPTATSNLGLAANHTGAPCLE) are extracellular. A glycan (N-linked (GlcNAc...) asparagine) is linked at N29. Residues 38 to 63 (VPIPDGLFLSLGLVSLVENVLVVAAI) form a helical membrane-spanning segment. The Cytoplasmic segment spans residues 64-72 (AKNRNLHSS). A helical transmembrane segment spans residues 73–93 (MYCFICCLAVSDLLVSGSNML). Over 94–118 (ETAIILLLEAGALVTRASVVQQLHN) the chain is Extracellular. Residues 119–140 (TIDVLTCSSMLCSLCFLGAIAV) traverse the membrane as a helical segment. Residues 141–163 (DRYISIFYALRYHSIMTLPRAQR) are Cytoplasmic-facing. A helical transmembrane segment spans residues 164–183 (AIAAIWVASVLSSTLFITYY). At 184–191 (DHAAVLLC) the chain is on the extracellular side. A helical membrane pass occupies residues 192 to 211 (LVVFFLAMLVLMAVLYVHML). Topologically, residues 212 to 240 (ARACQHAQGIIRLHKRQPPAHKGFGLRGA) are cytoplasmic. The helical transmembrane segment at 241-266 (ATLTILLGIFFLCWGPFFLHLTLVVF) threads the bilayer. The Extracellular portion of the chain corresponds to 267 to 279 (CPQHMTCSCIFKN). Residues 280–300 (FKVFLTLIICNTIIDPLIYAF) form a helical membrane-spanning segment. Residues 301–344 (RSQELRRTLKEVLLCSRWPGCWAEGGGDSVWPGSCVTLRGPLPP) lie on the Cytoplasmic side of the membrane. C315 carries the S-palmitoyl cysteine lipid modification.

This sequence belongs to the G-protein coupled receptor 1 family. Interacts with MGRN1, but does not undergo MGRN1-mediated ubiquitination; this interaction competes with GNAS-binding and thus inhibits agonist-induced cAMP production. Interacts with OPN3; the interaction results in a decrease in MC1R-mediated cAMP signaling and ultimately a decrease in melanin production in melanocytes.

The protein localises to the cell membrane. Receptor for MSH (alpha, beta and gamma) and ACTH. The activity of this receptor is mediated by G proteins which activate adenylate cyclase. Mediates melanogenesis, the production of eumelanin (black/brown) and phaeomelanin (red/yellow), via regulation of cAMP signaling in melanocytes. This chain is Melanocyte-stimulating hormone receptor (MC1R), found in Callimico goeldii (Goeldi's marmoset).